Consider the following 516-residue polypeptide: MSQPDKVLILDFGSQYTQLIARRVREAGVYSEIHPCTVTAKEVAAMAPKAVILSGGPSSVADADAPPFDPAVFDLGLPMLCICYGMQLLAHHLPGGQVAASTDREYGRADLQLLADTPLFAGLPQKDGHIVWMSHGDKVMAAPDGFVVAARTKNVDIAALANASRRIYALQFHPEVAHTEDGERILHNFLFEIAGLTSGWTMSSFLETELASLKEKVGDDEVVCALSGGVDSTVVAVMLHKAIGKKLHCIFVDNGLLRMGEGEEVAAYLREHFDLNLHYVDAAKLFLDKLAGVTDPEEKRKIIGKTFIEVFEVEAAKLPKVKYLAQGTLYPDVIESVSFKGPSAVIKSHHNVGGLPEVMKLALIEPLRELFKDEVRKVAVELGMPDFIIWRHPFPGPGLAIRIIGEVTEERLEILRRTDKIVQSELVASGWYRKVWQGFAVLLPLKTVGVMGDGRTYENVAAIRVVDSLDAMTADWSRLPSEILAVMSNRIINEVKGVNRVVFDVSSKPPATIEWE.

One can recognise a Glutamine amidotransferase type-1 domain in the interval 6–199; sequence KVLILDFGSQ…LFEIAGLTSG (194 aa). The active-site Nucleophile is the Cys-83. Residues His-173 and Glu-175 contribute to the active site. Residues 200-391 form the GMPS ATP-PPase domain; the sequence is WTMSSFLETE…LGMPDFIIWR (192 aa). Residue 227–233 participates in ATP binding; sequence SGGVDST.

In terms of assembly, homodimer.

It carries out the reaction XMP + L-glutamine + ATP + H2O = GMP + L-glutamate + AMP + diphosphate + 2 H(+). The protein operates within purine metabolism; GMP biosynthesis; GMP from XMP (L-Gln route): step 1/1. Its function is as follows. Catalyzes the synthesis of GMP from XMP. The polypeptide is GMP synthase [glutamine-hydrolyzing] (Solidesulfovibrio magneticus (strain ATCC 700980 / DSM 13731 / RS-1) (Desulfovibrio magneticus)).